Here is a 382-residue protein sequence, read N- to C-terminus: Mannitol-1-phosphate 5-dehydrogenase (382 aa).

3–14 is an NAD(+) binding site; sequence ALHFGAGNIGRG. Residue K269 is modified to N6-acetyllysine.

It belongs to the mannitol dehydrogenase family.

It catalyses the reaction D-mannitol 1-phosphate + NAD(+) = beta-D-fructose 6-phosphate + NADH + H(+). The sequence is that of Mannitol-1-phosphate 5-dehydrogenase from Escherichia coli O7:K1 (strain IAI39 / ExPEC).